A 455-amino-acid chain; its full sequence is Golgi pH regulator (455 aa).

The next 5 membrane-spanning stretches (helical) occupy residues 5–25 (IDSSIMITSQILFFGFGWLFF), 46–66 (VTFAFSCTMFELIIFEILGVL), 79–99 (LCVILLILVFMVPFYIGYFIV), 114–134 (CLLWLTFMYFFWKLGDPFPIL), and 150–170 (VGVIGVTLMALLSGFGAVNCP). Residues Asn-180 and Asn-243 are each glycosylated (N-linked (GlcNAc...) asparagine). 4 helical membrane-spanning segments follow: residues 290-310 (GYFFSIYCVWKIFMATINIVF), 343-363 (ISFILVGIIIVTSIRGLLITL), 378-398 (VIVLLLAQIMGMYFVSSVLLI), and 425-445 (WFDVIFLVSALSSILFLYLAH).

Belongs to the Golgi pH regulator (TC 1.A.38) family. As to quaternary structure, homotrimer. Interacts with RABL3; the interaction stabilizes GPR89A.

It is found in the golgi apparatus membrane. It catalyses the reaction iodide(out) = iodide(in). The enzyme catalyses chloride(in) = chloride(out). It carries out the reaction bromide(in) = bromide(out). The catalysed reaction is fluoride(in) = fluoride(out). Its function is as follows. Voltage-gated channel that enables the transfer of monoatomic anions such as iodide, chloride, bromide and fluoride which may function in counter-ion conductance and participates in Golgi acidification. Plays a role in lymphocyte development, probably by acting as a RABL3 effector in hematopoietic cells. This chain is Golgi pH regulator, found in Bos taurus (Bovine).